A 322-amino-acid polypeptide reads, in one-letter code: ATP-dependent 6-phosphofructokinase (322 aa).

Gly11 provides a ligand contact to ATP. 21 to 25 (RAVTR) is a binding site for ADP. Residues 72–73 (RC) and 102–105 (GDGS) contribute to the ATP site. Position 103 (Asp103) interacts with Mg(2+). 127 to 129 (TID) contacts substrate. Residue Asp129 is the Proton acceptor of the active site. Position 156 (Arg156) interacts with ADP. Residues Arg164 and 171 to 173 (MGR) each bind substrate. Residues 187-189 (GAE), Arg213, and 215-217 (KKH) each bind ADP. Residues Glu224, Arg245, and 251-254 (HIQR) each bind substrate.

It belongs to the phosphofructokinase type A (PFKA) family. ATP-dependent PFK group I subfamily. Prokaryotic clade 'B1' sub-subfamily. In terms of assembly, homotetramer. The cofactor is Mg(2+).

The protein localises to the cytoplasm. It catalyses the reaction beta-D-fructose 6-phosphate + ATP = beta-D-fructose 1,6-bisphosphate + ADP + H(+). Its pathway is carbohydrate degradation; glycolysis; D-glyceraldehyde 3-phosphate and glycerone phosphate from D-glucose: step 3/4. Allosterically activated by ADP and other diphosphonucleosides, and allosterically inhibited by phosphoenolpyruvate. Catalyzes the phosphorylation of D-fructose 6-phosphate to fructose 1,6-bisphosphate by ATP, the first committing step of glycolysis. This Staphylococcus epidermidis (strain ATCC 12228 / FDA PCI 1200) protein is ATP-dependent 6-phosphofructokinase.